We begin with the raw amino-acid sequence, 157 residues long: Transcription elongation factor GreA (157 aa).

Residues 12–74 (LKKLEEELEY…TLEAMLKNAK (63 aa)) are a coiled coil.

This sequence belongs to the GreA/GreB family.

Functionally, necessary for efficient RNA polymerase transcription elongation past template-encoded arresting sites. The arresting sites in DNA have the property of trapping a certain fraction of elongating RNA polymerases that pass through, resulting in locked ternary complexes. Cleavage of the nascent transcript by cleavage factors such as GreA or GreB allows the resumption of elongation from the new 3'terminus. GreA releases sequences of 2 to 3 nucleotides. The protein is Transcription elongation factor GreA of Caldanaerobacter subterraneus subsp. tengcongensis (strain DSM 15242 / JCM 11007 / NBRC 100824 / MB4) (Thermoanaerobacter tengcongensis).